A 663-amino-acid chain; its full sequence is uncharacterized protein (663 aa).

ATP is bound at residue Gly207–Thr214.

The protein belongs to the DNA2/NAM7 helicase family.

This is an uncharacterized protein from Methanocaldococcus jannaschii (strain ATCC 43067 / DSM 2661 / JAL-1 / JCM 10045 / NBRC 100440) (Methanococcus jannaschii).